Consider the following 265-residue polypeptide: Uroporphyrinogen-III synthase (265 aa).

It belongs to the uroporphyrinogen-III synthase family. In terms of assembly, monomer.

It localises to the cytoplasm. Its subcellular location is the cytosol. It catalyses the reaction hydroxymethylbilane = uroporphyrinogen III + H2O. It participates in porphyrin-containing compound metabolism; protoporphyrin-IX biosynthesis; coproporphyrinogen-III from 5-aminolevulinate: step 3/4. Its function is as follows. Catalyzes cyclization of the linear tetrapyrrole, hydroxymethylbilane, to the macrocyclic uroporphyrinogen III, the branch point for the various sub-pathways leading to the wide diversity of porphyrins. Porphyrins act as cofactors for a multitude of enzymes that perform a variety of processes within the cell such as methionine synthesis (vitamin B12) or oxygen transport (heme). In Mus musculus (Mouse), this protein is Uroporphyrinogen-III synthase (Uros).